We begin with the raw amino-acid sequence, 356 residues long: uncharacterized protein (356 aa).

Residues 25 to 72 form a disordered region; the sequence is EENNQENNKKFIEEFYPDKESDKNFSDDDSDDSDDSDDSENSDEEFDN. Residues 31-50 are compositionally biased toward basic and acidic residues; the sequence is NNKKFIEEFYPDKESDKNFS. Acidic residues predominate over residues 51 to 70; the sequence is DDDSDDSDDSDDSENSDEEF. The stretch at 328–356 forms a coiled coil; the sequence is EDTLNHSHSNKIKELENKITELKYQNEIN.

The protein belongs to the mimivirus L17/R827 family.

This is an uncharacterized protein from Acanthamoeba polyphaga mimivirus (APMV).